Reading from the N-terminus, the 248-residue chain is 1-(5-phosphoribosyl)-5-[(5-phosphoribosylamino)methylideneamino] imidazole-4-carboxamide isomerase (248 aa).

Asp8 functions as the Proton acceptor in the catalytic mechanism. Residue Asp130 is the Proton donor of the active site.

Belongs to the HisA/HisF family.

It localises to the cytoplasm. It catalyses the reaction 1-(5-phospho-beta-D-ribosyl)-5-[(5-phospho-beta-D-ribosylamino)methylideneamino]imidazole-4-carboxamide = 5-[(5-phospho-1-deoxy-D-ribulos-1-ylimino)methylamino]-1-(5-phospho-beta-D-ribosyl)imidazole-4-carboxamide. It participates in amino-acid biosynthesis; L-histidine biosynthesis; L-histidine from 5-phospho-alpha-D-ribose 1-diphosphate: step 4/9. The protein is 1-(5-phosphoribosyl)-5-[(5-phosphoribosylamino)methylideneamino] imidazole-4-carboxamide isomerase of Alkalilimnicola ehrlichii (strain ATCC BAA-1101 / DSM 17681 / MLHE-1).